The sequence spans 570 residues: Double-stranded RNA-binding protein Staufen homolog 2 (570 aa).

The 68-residue stretch at T8–L75 folds into the DRBM 1 domain. 2 disordered regions span residues T71–I94 and N181–D203. Residues P83–I94 show a composition bias toward polar residues. A DRBM 2 domain is found at T95–N181. The residue at position 188 (S188) is a Phosphoserine. Positions S194 to D203 are enriched in basic and acidic residues. 2 DRBM domains span residues S207–K274 and N307–Y375. 2 consecutive short sequence motifs (nuclear localization signal) follow at residues K273 to R291 and L373 to I412. Positions L381–V570 are required for dendritic transport. A disordered region spans residues K387 to P409. The residue at position 395 (S395) is a Phosphoserine. A Phosphothreonine modification is found at T405. Residues S416, S426, S440, S455, and S492 each carry the phosphoserine modification. The tract at residues D528–V570 is disordered. A compositionally biased stretch (basic and acidic residues) spans G536 to D550.

As to quaternary structure, interacts with the exportin XPO5. This requires RNA and RAN bound to GTP. Interacts with microtubules. Isoform 2 and isoform 3 may also interact with ribosomes, and this association is independent of translation. Identified in a mRNP complex, at least composed of DHX9, DDX3X, ELAVL1, HNRNPU, IGF2BP1, ILF3, PABPC1, PCBP2, PTBP2, STAU1, STAU2, SYNCRIP and YBX1. Interacts with TRIM71 (via NHL repeats) in an RNA-dependent manner.

The protein localises to the cytoplasm. It localises to the nucleus. It is found in the nucleolus. Its subcellular location is the endoplasmic reticulum. RNA-binding protein required for the microtubule-dependent transport of neuronal RNA from the cell body to the dendrite. As protein synthesis occurs within the dendrite, the localization of specific mRNAs to dendrites may be a prerequisite for neurite outgrowth and plasticity at sites distant from the cell body. This Homo sapiens (Human) protein is Double-stranded RNA-binding protein Staufen homolog 2 (STAU2).